Reading from the N-terminus, the 440-residue chain is SET domain-containing protein 4 (440 aa).

Over residues 1 to 16 (MQKGKGRTSRIRRRKL) the composition is skewed to basic residues. The disordered stretch occupies residues 1 to 24 (MQKGKGRTSRIRRRKLCGSSESRG). The SET domain occupies 48 to 273 (SNLAPACFPG…KHEEVFICYG (226 aa)). Tyr272 lines the S-adenosyl-L-methionine pocket.

The protein belongs to the class V-like SAM-binding methyltransferase superfamily. SETD4 family. Forms a ternary complex with TBK1 and ZNF268; the interaction with TBK1 is ZNF268-dependent and leads to TBK1 monomethylation.

It localises to the cytoplasm. The protein resides in the cytosol. It is found in the nucleus. The enzyme catalyses L-lysyl(4)-[histone H3] + S-adenosyl-L-methionine = N(6)-methyl-L-lysyl(4)-[histone H3] + S-adenosyl-L-homocysteine + H(+). It catalyses the reaction N(6)-methyl-L-lysyl(4)-[histone H3] + S-adenosyl-L-methionine = N(6),N(6)-dimethyl-L-lysyl(4)-[histone H3] + S-adenosyl-L-homocysteine + H(+). It carries out the reaction L-lysyl(20)-[histone H4] + S-adenosyl-L-methionine = N(6)-methyl-L-lysyl(20)-[histone H4] + S-adenosyl-L-homocysteine + H(+). The catalysed reaction is N(6)-methyl-L-lysyl(20)-[histone H4] + S-adenosyl-L-methionine = N(6),N(6)-dimethyl-L-lysyl(20)-[histone H4] + S-adenosyl-L-homocysteine + H(+). The enzyme catalyses N(6),N(6)-dimethyl-L-lysyl(20)-[histone H4] + S-adenosyl-L-methionine = N(6),N(6),N(6)-trimethyl-L-lysyl(20)-[histone H4] + S-adenosyl-L-homocysteine + H(+). It catalyses the reaction L-lysyl-[protein] + S-adenosyl-L-methionine = N(6)-methyl-L-lysyl-[protein] + S-adenosyl-L-homocysteine + H(+). Its function is as follows. Protein-lysine N-methyltransferase that methylates both histones and non-histone proteins. Via its catalytic activity, regulates many processes, including cell proliferation, cell differentiation, inflammatory response and apoptosis. Regulates the inflammatory response by mediating mono- and dimethylation of 'Lys-4' of histone H3 (H3K4me1 and H3K4me2, respectively), leading to activate the transcription of pro-inflammatory cytokines IL6 and TNF-alpha. Through the catalysis of TBK1 monomethylation, may regulate virus-induced interferon signaling. TBK1 monomethylation enhances its interaction with MAVS, STING and IRF3, hence promoting antiviral interferon signaling. Also involved in the regulation of stem cell quiescence by catalyzing the trimethylation of 'Lys-20' of histone H4 (H4K20me3), thereby promoting heterochromatin formation. In the brain, epigenetically controls quiescence of neural stem cells for sustaining a protected neural stem cell population and maintaining a stem cell reservoir for neurogenesis. Involved in proliferation, migration, paracrine and myogenic differentiation of bone marrow mesenchymal stem cells (BMSCs). Through the catalysis of XRCC5/Ku70 trimethylation, regulates BAX-mediated apoptosis. SETD4-catalyzed XRCC5 methylation results in XRCC5 translocation to the cytoplasm, where it interacts with BAX, sequestering it from the mitochondria, hence preventing BAX-mediated apoptosis. This is SET domain-containing protein 4 from Homo sapiens (Human).